The following is an 872-amino-acid chain: Coatomer subunit gamma-2 (872 aa).

HEAT repeat units follow at residues 64 to 101 (MEATEAFFAMTRLFQSNDQTLRRMCYLTIKEMANISED), 283 to 320 (RELAPAVSVLQLFCSSPKPALRYAAVRTLNKVAMKHPS), 321 to 355 (AVTACNLDLENLITDSNRSIATLAITTLLKTGSES), 356 to 392 (SVDRLMKQISTFVSEISDEFKVVVVQAISALCQKYPR), 395 to 430 (SVMMTFLSNMLRDDGGFEYKRAIVDCIISIIEENPD), and 467 to 504 (PTPSKYIRFIFNRVVLENEAVRAAAVSALAKFGAQNEP).

It belongs to the COPG family. Oligomeric complex.

The protein resides in the cytoplasm. Its subcellular location is the golgi apparatus membrane. The protein localises to the cytoplasmic vesicle. It localises to the COPI-coated vesicle membrane. Its function is as follows. The coatomer is a cytosolic protein complex that binds to dilysine motifs and reversibly associates with Golgi non-clathrin-coated vesicles, which further mediate biosynthetic protein transport from the ER, via the Golgi up to the trans Golgi network. Coatomer complex is required for budding from Golgi membranes, and is essential for the retrograde Golgi-to-ER transport of dilysine-tagged proteins. The polypeptide is Coatomer subunit gamma-2 (copg2) (Xenopus tropicalis (Western clawed frog)).